The following is a 137-amino-acid chain: Large-conductance mechanosensitive channel (137 aa).

Transmembrane regions (helical) follow at residues 15–35 and 81–101; these read VDLA…TSLV and GKFI…FFVI.

The protein belongs to the MscL family. In terms of assembly, homopentamer.

The protein resides in the cell inner membrane. Its function is as follows. Channel that opens in response to stretch forces in the membrane lipid bilayer. May participate in the regulation of osmotic pressure changes within the cell. This chain is Large-conductance mechanosensitive channel, found in Hyphomonas neptunium (strain ATCC 15444).